The sequence spans 333 residues: Aspartate carbamoyltransferase catalytic subunit (333 aa).

2 residues coordinate carbamoyl phosphate: Arg-61 and Thr-62. Lys-89 contributes to the L-aspartate binding site. Residues Arg-111, His-144, and Gln-147 each contribute to the carbamoyl phosphate site. Residues Arg-184 and Arg-248 each contribute to the L-aspartate site. Carbamoyl phosphate contacts are provided by Gly-289 and Pro-290.

This sequence belongs to the aspartate/ornithine carbamoyltransferase superfamily. ATCase family. Heterododecamer (2C3:3R2) of six catalytic PyrB chains organized as two trimers (C3), and six regulatory PyrI chains organized as three dimers (R2).

The catalysed reaction is carbamoyl phosphate + L-aspartate = N-carbamoyl-L-aspartate + phosphate + H(+). It functions in the pathway pyrimidine metabolism; UMP biosynthesis via de novo pathway; (S)-dihydroorotate from bicarbonate: step 2/3. Functionally, catalyzes the condensation of carbamoyl phosphate and aspartate to form carbamoyl aspartate and inorganic phosphate, the committed step in the de novo pyrimidine nucleotide biosynthesis pathway. The chain is Aspartate carbamoyltransferase catalytic subunit from Trichormus variabilis (strain ATCC 29413 / PCC 7937) (Anabaena variabilis).